A 176-amino-acid polypeptide reads, in one-letter code: Translation initiation factor IF-3 (176 aa).

The protein belongs to the IF-3 family. As to quaternary structure, monomer.

It is found in the cytoplasm. Its function is as follows. IF-3 binds to the 30S ribosomal subunit and shifts the equilibrium between 70S ribosomes and their 50S and 30S subunits in favor of the free subunits, thus enhancing the availability of 30S subunits on which protein synthesis initiation begins. In Streptococcus equi subsp. zooepidemicus (strain H70), this protein is Translation initiation factor IF-3.